We begin with the raw amino-acid sequence, 440 residues long: ATP-dependent RNA helicase sub2 (440 aa).

The span at 1 to 16 (MSHEEDLIDYSDEELQ) shows a compositional bias: acidic residues. A disordered region spans residues 1-42 (MSHEEDLIDYSDEELQTTDAAATTAAPASNGEAKKGDLTVSG). The span at 17–28 (TTDAAATTAAPA) shows a compositional bias: low complexity. Residues 57–85 (TGFRDFLLKEELLRAITDCGFEHPSEVQQ) carry the Q motif motif. In terms of domain architecture, Helicase ATP-binding spans 88 to 263 (IPTAILNVDV…KKFMRNPLEV (176 aa)). 101-108 (AKSGLGKT) contributes to the ATP binding site. A DEAD box motif is present at residues 210–213 (DECD). The Helicase C-terminal domain maps to 291 to 436 (KLNELLDSLE…EYPEGGVDSS (146 aa)).

The protein belongs to the DEAD box helicase family. DECD subfamily.

Its subcellular location is the nucleus. The catalysed reaction is ATP + H2O = ADP + phosphate + H(+). Its function is as follows. ATP-binding RNA helicase involved in transcription elongation and required for the export of mRNA out of the nucleus. SUB2 also plays a role in pre-mRNA splicing and spliceosome assembly. May be involved in rDNA and telomeric silencing, and maintenance of genome integrity. In Aspergillus niger (strain ATCC MYA-4892 / CBS 513.88 / FGSC A1513), this protein is ATP-dependent RNA helicase sub2 (sub2).